We begin with the raw amino-acid sequence, 166 residues long: Vasopressin-neurophysin 2-copeptin (166 aa).

Positions 1-19 (MPDATLPACFLSLLAFTSA) are cleaved as a signal peptide. A disulfide bridge links cysteine 20 with cysteine 25. The residue at position 28 (glycine 28) is a Glycine amide. Intrachain disulfides connect cysteine 41–cysteine 85, cysteine 44–cysteine 58, cysteine 52–cysteine 75, cysteine 59–cysteine 65, cysteine 92–cysteine 104, cysteine 98–cysteine 116, and cysteine 105–cysteine 110. A glycan (N-linked (GlcNAc...) asparagine) is linked at asparagine 133.

The protein belongs to the vasopressin/oxytocin family. Interacts with vasopressin receptors V1bR/AVPR1B (Ki=85 pM), V1aR/AVPR1A (Ki=0.6 nM) and V2R/AVPR2 (Ki=4.9 nM). Interacts with oxytocin receptor (OXTR) (Ki=110 nM).

It is found in the secreted. Its function is as follows. Neurophysin 2 specifically binds vasopressin. Functionally, vasopressin has a direct antidiuretic action on the kidney, it also causes vasoconstriction of the peripheral vessels. Acts by binding to vasopressin receptors (V1bR/AVPR1B, V1aR/AVPR1A, and V2R/AVPR2). The polypeptide is Vasopressin-neurophysin 2-copeptin (AVP) (Bos taurus (Bovine)).